The chain runs to 153 residues: Ribosome maturation factor RimP (153 aa).

It belongs to the RimP family.

The protein localises to the cytoplasm. Functionally, required for maturation of 30S ribosomal subunits. This chain is Ribosome maturation factor RimP, found in Nostoc punctiforme (strain ATCC 29133 / PCC 73102).